Reading from the N-terminus, the 542-residue chain is Sialate O-acetylesterase (542 aa).

An N-terminal signal peptide occupies residues 1–23 (MVSPRPVGLMLLLIIARVSRGAG). N-linked (GlcNAc...) asparagine glycans are attached at residues Asn-107, Asn-138, Asn-188, Asn-294, Asn-357, Asn-428, Asn-449, and Asn-463.

In terms of assembly, disulfide-linked heterodimer of a small subunit and a large subunit. In terms of processing, the two subunits are derived from a single precursor by proteolytic cleavage. Post-translationally, glycosylated. In terms of tissue distribution, widely expressed.

It localises to the lysosome. The enzyme catalyses N-acetyl-9-O-acetylneuraminate + H2O = N-acetylneuraminate + acetate + H(+). It carries out the reaction an Ac-O-9-sialoglycoconjugate + H2O = a sialoglycoconjugate + acetate + H(+). With respect to regulation, inhibited by diisopropyl fluorophosphate and diethyl-P-nitrophenyl phosphate. In terms of biological role, catalyzes the removal of O-acetyl ester groups from position 9 of the free diacetylated sialate N-acetyl-9-O-acetylneuraminate (Neu5,9Ac2) in the cytosol and of the diacetylated sialate residues of sialylglycoconjugates in the lysosomes. Together with the sialate-O-acetyltransferase they regulate the balance of acetylated sialoglycoconjugates, key players in various processes such as cell-cell interactions, host-pathogen recognition, and tumor antigenicity. The sequence is that of Sialate O-acetylesterase (Siae) from Rattus norvegicus (Rat).